A 209-amino-acid polypeptide reads, in one-letter code: Thymidylate kinase (209 aa).

11–18 lines the ATP pocket; the sequence is GIEGAGKT.

It belongs to the thymidylate kinase family.

It carries out the reaction dTMP + ATP = dTDP + ADP. In terms of biological role, phosphorylation of dTMP to form dTDP in both de novo and salvage pathways of dTTP synthesis. The chain is Thymidylate kinase (tmk) from Pasteurella multocida (strain Pm70).